A 611-amino-acid polypeptide reads, in one-letter code: U-box domain-containing protein 12 (611 aa).

Positions 227 to 301 constitute a U-box domain; it reads IIPDEFRCPI…SQWCEANGIE (75 aa). ARM repeat units follow at residues 355–394, 396–435, 437–476, and 478–517; these read VNNR…NLSI, ENNK…SLSV, DENK…NLCI, and QGNK…ILAG.

The catalysed reaction is S-ubiquitinyl-[E2 ubiquitin-conjugating enzyme]-L-cysteine + [acceptor protein]-L-lysine = [E2 ubiquitin-conjugating enzyme]-L-cysteine + N(6)-ubiquitinyl-[acceptor protein]-L-lysine.. It functions in the pathway protein modification; protein ubiquitination. Its function is as follows. Possesses E3 ubiquitin-protein ligase in vitro. The polypeptide is U-box domain-containing protein 12 (PUB12) (Oryza sativa subsp. japonica (Rice)).